A 243-amino-acid chain; its full sequence is Probable enoyl-CoA hydratase echA6 (243 aa).

The protein belongs to the enoyl-CoA hydratase/isomerase family.

The enzyme catalyses a (3S)-3-hydroxyacyl-CoA = a (2E)-enoyl-CoA + H2O. It carries out the reaction a 4-saturated-(3S)-3-hydroxyacyl-CoA = a (3E)-enoyl-CoA + H2O. Could possibly oxidize fatty acids using specific components. In Mycobacterium bovis (strain ATCC BAA-935 / AF2122/97), this protein is Probable enoyl-CoA hydratase echA6 (echA6).